A 459-amino-acid chain; its full sequence is MSNRFAVILAAGKGTRMKSKLYKVLHPVCGKPMVQHVVDQVSQLGLQKLVTVVGHGAEMVQEQLGNVSEFALQAEQLGTAHAVDQAASVLANEEGTTLVICGDTPLITAETMEALLQQHKEAGAMATVLTAYIEEPAGYGRIVRNENGHVEKIVEHKDANEKELAIKEINTGTYCFDNKALFASLSKVSNDNVQGEYYLPDVIEILKNEGHIVSAYQTEQFDETLGVNDRVALSQAEIIMKNRINRKNMVNGVTIIDPSNTYISADAIIGSDTVLHPGTIIEGNTVIGSDCEIGPHTVIRDSEIGDRTTIRQSTVHDSKLGTEVSVGPFAHIRPDSVIGDEVRVGNFVEIKKTVFGNRSKASHLSYIGDAQVGEDVNLGCGSITVNYDGKNKFKTVIGNGVFIGCNSNLVAPVTVEDGAYVAAGSTITENVPSKALSVARARQVNKEDYVDQLLNKKKS.

Residues 1-230 are pyrophosphorylase; sequence MSNRFAVILA…FDETLGVNDR (230 aa). UDP-N-acetyl-alpha-D-glucosamine is bound by residues 9–12, Lys23, Gln73, and 78–79; these read LAAG and GT. Asp103 is a binding site for Mg(2+). Residues Gly140, Glu155, Asn170, and Asn228 each contribute to the UDP-N-acetyl-alpha-D-glucosamine site. Asn228 serves as a coordination point for Mg(2+). The segment at 231–251 is linker; it reads VALSQAEIIMKNRINRKNMVN. The tract at residues 252 to 459 is N-acetyltransferase; the sequence is GVTIIDPSNT…VDQLLNKKKS (208 aa). The UDP-N-acetyl-alpha-D-glucosamine site is built by Arg333 and Lys351. The Proton acceptor role is filled by His363. Residues Tyr366 and Asn377 each coordinate UDP-N-acetyl-alpha-D-glucosamine. Acetyl-CoA-binding positions include 386–387, Ala423, and Arg440; that span reads NY.

In the N-terminal section; belongs to the N-acetylglucosamine-1-phosphate uridyltransferase family. This sequence in the C-terminal section; belongs to the transferase hexapeptide repeat family. As to quaternary structure, homotrimer. Requires Mg(2+) as cofactor.

The protein localises to the cytoplasm. It carries out the reaction alpha-D-glucosamine 1-phosphate + acetyl-CoA = N-acetyl-alpha-D-glucosamine 1-phosphate + CoA + H(+). It catalyses the reaction N-acetyl-alpha-D-glucosamine 1-phosphate + UTP + H(+) = UDP-N-acetyl-alpha-D-glucosamine + diphosphate. It participates in nucleotide-sugar biosynthesis; UDP-N-acetyl-alpha-D-glucosamine biosynthesis; N-acetyl-alpha-D-glucosamine 1-phosphate from alpha-D-glucosamine 6-phosphate (route II): step 2/2. The protein operates within nucleotide-sugar biosynthesis; UDP-N-acetyl-alpha-D-glucosamine biosynthesis; UDP-N-acetyl-alpha-D-glucosamine from N-acetyl-alpha-D-glucosamine 1-phosphate: step 1/1. It functions in the pathway bacterial outer membrane biogenesis; LPS lipid A biosynthesis. Catalyzes the last two sequential reactions in the de novo biosynthetic pathway for UDP-N-acetylglucosamine (UDP-GlcNAc). The C-terminal domain catalyzes the transfer of acetyl group from acetyl coenzyme A to glucosamine-1-phosphate (GlcN-1-P) to produce N-acetylglucosamine-1-phosphate (GlcNAc-1-P), which is converted into UDP-GlcNAc by the transfer of uridine 5-monophosphate (from uridine 5-triphosphate), a reaction catalyzed by the N-terminal domain. This chain is Bifunctional protein GlmU, found in Bacillus cereus (strain G9842).